A 382-amino-acid chain; its full sequence is S-adenosylmethionine synthase (382 aa).

H16 serves as a coordination point for ATP. Mg(2+) is bound at residue D18. Residue E44 participates in K(+) binding. Positions 57 and 100 each coordinate L-methionine. A flexible loop region spans residues 100–110 (QSPDIAQGVDN). ATP contacts are provided by residues 165–167 (DAK), 231–232 (RF), D240, 246–247 (RK), and K267. L-methionine is bound at residue D240. K271 lines the L-methionine pocket.

Belongs to the AdoMet synthase family. In terms of assembly, homotetramer; dimer of dimers. Requires Mg(2+) as cofactor. The cofactor is K(+).

The protein localises to the cytoplasm. It carries out the reaction L-methionine + ATP + H2O = S-adenosyl-L-methionine + phosphate + diphosphate. Its pathway is amino-acid biosynthesis; S-adenosyl-L-methionine biosynthesis; S-adenosyl-L-methionine from L-methionine: step 1/1. Functionally, catalyzes the formation of S-adenosylmethionine (AdoMet) from methionine and ATP. The overall synthetic reaction is composed of two sequential steps, AdoMet formation and the subsequent tripolyphosphate hydrolysis which occurs prior to release of AdoMet from the enzyme. This Legionella pneumophila subsp. pneumophila (strain Philadelphia 1 / ATCC 33152 / DSM 7513) protein is S-adenosylmethionine synthase.